We begin with the raw amino-acid sequence, 442 residues long: Chromosomal replication initiator protein DnaA (442 aa).

The tract at residues 1–75 (MDAWPRCLER…GNGEVALAVG (75 aa)) is domain I, interacts with DnaA modulators. The tract at residues 75–104 (GSRPRAPEPAPAPVAATIAPQAAPIAPFAG) is domain II. Positions 105-322 (NLDSHYTFAN…GALNTLVARA (218 aa)) are domain III, AAA+ region. Positions 150, 152, 153, and 154 each coordinate ATP. A domain IV, binds dsDNA region spans residues 323 to 442 (NFTGRSITVE…WEKLIRKLSE (120 aa)).

The protein belongs to the DnaA family. Oligomerizes as a right-handed, spiral filament on DNA at oriC.

The protein localises to the cytoplasm. In terms of biological role, plays an essential role in the initiation and regulation of chromosomal replication. ATP-DnaA binds to the origin of replication (oriC) to initiate formation of the DNA replication initiation complex once per cell cycle. Binds the DnaA box (a 9 base pair repeat at the origin) and separates the double-stranded (ds)DNA. Forms a right-handed helical filament on oriC DNA; dsDNA binds to the exterior of the filament while single-stranded (ss)DNA is stabiized in the filament's interior. The ATP-DnaA-oriC complex binds and stabilizes one strand of the AT-rich DNA unwinding element (DUE), permitting loading of DNA polymerase. After initiation quickly degrades to an ADP-DnaA complex that is not apt for DNA replication. Binds acidic phospholipids. The polypeptide is Chromosomal replication initiator protein DnaA (Xanthomonas oryzae pv. oryzae (strain PXO99A)).